Here is a 282-residue protein sequence, read N- to C-terminus: ATP synthase subunit a (282 aa).

Helical transmembrane passes span A45–F65, I106–I126, I160–I179, L232–W252, and A253–V273.

It belongs to the ATPase A chain family. As to quaternary structure, F-type ATPases have 2 components, CF(1) - the catalytic core - and CF(0) - the membrane proton channel. CF(1) has five subunits: alpha(3), beta(3), gamma(1), delta(1), epsilon(1). CF(0) has three main subunits: a(1), b(2) and c(9-12). The alpha and beta chains form an alternating ring which encloses part of the gamma chain. CF(1) is attached to CF(0) by a central stalk formed by the gamma and epsilon chains, while a peripheral stalk is formed by the delta and b chains.

Its subcellular location is the cell inner membrane. Functionally, key component of the proton channel; it plays a direct role in the translocation of protons across the membrane. This Marinomonas sp. (strain MWYL1) protein is ATP synthase subunit a.